A 20-amino-acid polypeptide reads, in one-letter code: Antifungal protein 2 large subunit (20 aa).

Positions 1 to 20 are disordered; that stretch reads PEDPQRRYQEXQREXRXQQE.

As to quaternary structure, heterodimer of a large and a small subunit.

In terms of biological role, possesses antifungal activity against P.infestans but not F.graminearum. This Malva parviflora (Little mallow) protein is Antifungal protein 2 large subunit.